We begin with the raw amino-acid sequence, 505 residues long: ATP synthase subunit alpha (505 aa).

Residues 118–138 form a disordered region; the sequence is VDGLGPINTTNTRPIESPAPG. 172-179 provides a ligand contact to ATP; the sequence is GDRQTGKT.

It belongs to the ATPase alpha/beta chains family. In terms of assembly, F-type ATPases have 2 components, CF(1) - the catalytic core - and CF(0) - the membrane proton channel. CF(1) has five subunits: alpha(3), beta(3), gamma(1), delta(1), epsilon(1). CF(0) has three main subunits: a(1), b(2) and c(9-12). The alpha and beta chains form an alternating ring which encloses part of the gamma chain. CF(1) is attached to CF(0) by a central stalk formed by the gamma and epsilon chains, while a peripheral stalk is formed by the delta and b chains.

The protein localises to the cell membrane. The catalysed reaction is ATP + H2O + 4 H(+)(in) = ADP + phosphate + 5 H(+)(out). Produces ATP from ADP in the presence of a proton gradient across the membrane. The alpha chain is a regulatory subunit. The polypeptide is ATP synthase subunit alpha (Bacillus cereus (strain ATCC 14579 / DSM 31 / CCUG 7414 / JCM 2152 / NBRC 15305 / NCIMB 9373 / NCTC 2599 / NRRL B-3711)).